We begin with the raw amino-acid sequence, 544 residues long: Chaperonin GroEL (544 aa).

Residues 29–32 (TLGP), lysine 50, 86–90 (DGTTT), glycine 414, and aspartate 495 each bind ATP.

The protein belongs to the chaperonin (HSP60) family. In terms of assembly, forms a cylinder of 14 subunits composed of two heptameric rings stacked back-to-back. Interacts with the co-chaperonin GroES.

The protein localises to the cytoplasm. It carries out the reaction ATP + H2O + a folded polypeptide = ADP + phosphate + an unfolded polypeptide.. Together with its co-chaperonin GroES, plays an essential role in assisting protein folding. The GroEL-GroES system forms a nano-cage that allows encapsulation of the non-native substrate proteins and provides a physical environment optimized to promote and accelerate protein folding. In Treponema pallidum subsp. pallidum (strain SS14), this protein is Chaperonin GroEL.